The chain runs to 968 residues: MKSQNSKEQKSDFSYKETLNLLKTDFSMRANSVLREPEIQNFWANNDIDFQLGSSNSGEIFTLHDGPPYANGALHMGHALNKVLKDIINKYKTLKGFRVHFVPGWDCHGLPIELKVLQNLKSDERKNLDTLNLRKKATDYAHIQINNQKEGFKRWGIWGDWNNPYLTLKKSYESAQIGVFGKMFLNGYIYRGLKPVHWSPSSRTALAEAELEYPDDHYSKSIYVSLKITKIPEEIQLNFIQKNINIKKDFFQNNSFITIWTTTPWTIPANEAVAVNPKINYIFAIDEEKRIYLFAKDLCSEISKKFNKDFKVLLEVKGSKLENIEYQHPSKNKNCRIVIGGDYITTESGTGIVHTAPGHGIDDFNVGQKYDLPITCVVDEKGNLNEYSGQFKGSNVLKDANDLIIEYLKVNNLLLLQENYKHRYPYDWRTKKPTIFRATEQWFASVNGFRSSALKAIEDVEWMPETGKKRIYSMVVGRGDWCISRQRSWGVPIPVFYKKNGNEILLNKEIINHIQELFSEHGADIWWDWDVKNLLPENYAKESDLWKKGKDTMDVWFDSGSSWAAVCELRSELKYPADLYLEGSDQHRGWFQSSLLTSVAVNNKPPYKKVLTHGFALDENGRKMSKSLGNVVDPNIIINGGNNKKTDPAYGADVLRLWVSSVDYSVDVPIGSNILKQLSDVYRKVRNTARYLLGNIHDYDPKIDSFEIDQLPLLDQWMLGRLVEVTDQISNAYENYEFSKFFQILQSFCVVDLSNFYLDIAKDRLYVSSKSQFRRRSCQFVMSKVVENLAVLISPVLCHMAEDIWQNIPYSTKEKSVFQRGWPIFSQSWKNKILNEHISNLRNLRVEINKAIEGCRNKQIIGAALETEVNYLPEDKALKDSLTWLKEFGNQDVDLFRDWLIVSNFQVVSDLVDNSLATDNNALGKIQINKAQGQKCDRCWHYQKETFNGIQNTKLCKRCSNIINFEFI.

Residues 68 to 78 carry the 'HIGH' region motif; sequence PYANGALHMGH. Position 582 (E582) interacts with L-isoleucyl-5'-AMP. The 'KMSKS' region signature appears at 623-627; the sequence is KMSKS. K626 provides a ligand contact to ATP. 4 residues coordinate Zn(2+): C936, C939, C956, and C959.

It belongs to the class-I aminoacyl-tRNA synthetase family. IleS type 1 subfamily. In terms of assembly, monomer. The cofactor is Zn(2+).

It is found in the cytoplasm. It catalyses the reaction tRNA(Ile) + L-isoleucine + ATP = L-isoleucyl-tRNA(Ile) + AMP + diphosphate. In terms of biological role, catalyzes the attachment of isoleucine to tRNA(Ile). As IleRS can inadvertently accommodate and process structurally similar amino acids such as valine, to avoid such errors it has two additional distinct tRNA(Ile)-dependent editing activities. One activity is designated as 'pretransfer' editing and involves the hydrolysis of activated Val-AMP. The other activity is designated 'posttransfer' editing and involves deacylation of mischarged Val-tRNA(Ile). This Prochlorococcus marinus (strain MIT 9301) protein is Isoleucine--tRNA ligase.